Consider the following 32-residue polypeptide: Trypsin inhibitor 3 (32 aa).

3 disulfide bridges follow: C6/C23, C13/C25, and C19/C31.

This sequence belongs to the protease inhibitor I7 (squash-type serine protease inhibitor) family.

It is found in the secreted. Its function is as follows. Inhibits trypsin. The sequence is that of Trypsin inhibitor 3 from Cucurbita pepo (Vegetable marrow).